Reading from the N-terminus, the 370-residue chain is Probable trehalose-phosphate phosphatase J (370 aa).

This sequence belongs to the trehalose phosphatase family. It depends on a divalent metal cation as a cofactor.

It carries out the reaction alpha,alpha-trehalose 6-phosphate + H2O = alpha,alpha-trehalose + phosphate. The protein operates within glycan biosynthesis; trehalose biosynthesis. Removes the phosphate from trehalose 6-phosphate to produce free trehalose. Trehalose accumulation in plant may improve abiotic stress tolerance. The sequence is that of Probable trehalose-phosphate phosphatase J (TPPJ) from Arabidopsis thaliana (Mouse-ear cress).